A 345-amino-acid chain; its full sequence is Phosphoribosylformylglycinamidine cyclo-ligase (345 aa).

Belongs to the AIR synthase family.

The protein localises to the cytoplasm. It catalyses the reaction 2-formamido-N(1)-(5-O-phospho-beta-D-ribosyl)acetamidine + ATP = 5-amino-1-(5-phospho-beta-D-ribosyl)imidazole + ADP + phosphate + H(+). The protein operates within purine metabolism; IMP biosynthesis via de novo pathway; 5-amino-1-(5-phospho-D-ribosyl)imidazole from N(2)-formyl-N(1)-(5-phospho-D-ribosyl)glycinamide: step 2/2. The protein is Phosphoribosylformylglycinamidine cyclo-ligase of Staphylococcus carnosus (strain TM300).